A 424-amino-acid chain; its full sequence is 5-methylthioadenosine/S-adenosylhomocysteine deaminase (424 aa).

Residues His60 and His62 each coordinate Zn(2+). 2 residues coordinate substrate: Glu89 and His181. A Zn(2+)-binding site is contributed by His208. The substrate site is built by Glu211 and Asp296. Asp296 lines the Zn(2+) pocket.

The protein belongs to the metallo-dependent hydrolases superfamily. MTA/SAH deaminase family. Zn(2+) serves as cofactor.

The catalysed reaction is S-adenosyl-L-homocysteine + H2O + H(+) = S-inosyl-L-homocysteine + NH4(+). It carries out the reaction S-methyl-5'-thioadenosine + H2O + H(+) = S-methyl-5'-thioinosine + NH4(+). Functionally, catalyzes the deamination of 5-methylthioadenosine and S-adenosyl-L-homocysteine into 5-methylthioinosine and S-inosyl-L-homocysteine, respectively. Is also able to deaminate adenosine. The polypeptide is 5-methylthioadenosine/S-adenosylhomocysteine deaminase (Thermococcus onnurineus (strain NA1)).